The sequence spans 340 residues: UDP-3-O-(3-hydroxymyristoyl)glucosamine N-acyltransferase (340 aa).

The active-site Proton acceptor is His239.

This sequence belongs to the transferase hexapeptide repeat family. LpxD subfamily. In terms of assembly, homotrimer.

It catalyses the reaction a UDP-3-O-[(3R)-3-hydroxyacyl]-alpha-D-glucosamine + a (3R)-hydroxyacyl-[ACP] = a UDP-2-N,3-O-bis[(3R)-3-hydroxyacyl]-alpha-D-glucosamine + holo-[ACP] + H(+). The enzyme catalyses UDP-3-O-[(3R)-3-hydroxytetradecanoyl]-alpha-D-glucosamine + (3R)-hydroxytetradecanoyl-[ACP] = UDP-2-N,3-O-bis[(3R)-3-hydroxytetradecanoyl]-alpha-D-glucosamine + holo-[ACP] + H(+). The protein operates within glycolipid biosynthesis; lipid IV(A) biosynthesis; lipid IV(A) from (3R)-3-hydroxytetradecanoyl-[acyl-carrier-protein] and UDP-N-acetyl-alpha-D-glucosamine: step 3/6. Catalyzes the N-acylation of UDP-3-O-(hydroxytetradecanoyl)glucosamine using 3-hydroxytetradecanoyl-ACP as the acyl donor. Is involved in the biosynthesis of lipid A, a phosphorylated glycolipid that anchors the lipopolysaccharide to the outer membrane of the cell. The chain is UDP-3-O-(3-hydroxymyristoyl)glucosamine N-acyltransferase from Pectobacterium atrosepticum (strain SCRI 1043 / ATCC BAA-672) (Erwinia carotovora subsp. atroseptica).